We begin with the raw amino-acid sequence, 199 residues long: MKQLVLASGNAGKLEELRAMLAGLPLRVVAQGELGVEDVPETGLTFVENALIKARHASAVTGLPALADDSGLIVDALDGAPGLYSARYAGSPTNALANNAKLLDAMREVPSDRRSARFYAVIVLLRHPEDPQPLIAEGSWEGVITTQPRGDGGFGYNPVFLDPVYGLTAAEMDTALKNRLSHRAVALATLQHKLHAMSL.

8 to 13 (SGNAGK) provides a ligand contact to substrate. The active-site Proton acceptor is D69. D69 contacts Mg(2+). Substrate is bound by residues S70, 154–157 (FGYN), K177, and 182–183 (HR).

Belongs to the HAM1 NTPase family. In terms of assembly, homodimer. The cofactor is Mg(2+).

It carries out the reaction XTP + H2O = XMP + diphosphate + H(+). The catalysed reaction is dITP + H2O = dIMP + diphosphate + H(+). It catalyses the reaction ITP + H2O = IMP + diphosphate + H(+). In terms of biological role, pyrophosphatase that catalyzes the hydrolysis of nucleoside triphosphates to their monophosphate derivatives, with a high preference for the non-canonical purine nucleotides XTP (xanthosine triphosphate), dITP (deoxyinosine triphosphate) and ITP. Seems to function as a house-cleaning enzyme that removes non-canonical purine nucleotides from the nucleotide pool, thus preventing their incorporation into DNA/RNA and avoiding chromosomal lesions. The sequence is that of dITP/XTP pyrophosphatase from Xanthomonas axonopodis pv. citri (strain 306).